The primary structure comprises 82 residues: Protein Vpu (82 aa).

Over 1–7 (MQPLQIS) the chain is Extracellular. Residues 8–28 (AIVALVVAAIIAIVVWSIALL) form a helical membrane-spanning segment. At 29–82 (EYRKLLRQRKIDRLIDRIRERAEDSGNESEGDQEELSALVEMGGHDAPWDIDDL) the chain is on the cytoplasmic side. Phosphoserine; by host CK2 is present on residues serine 53 and serine 57.

Belongs to the HIV-1 VPU protein family. In terms of assembly, homopentamer. Interacts with host CD4 and BRTC; these interactions induce proteasomal degradation of CD4. Interacts with host BST2; this interaction leads to the degradation of host BST2. Interacts with host FBXW11. Interacts with host AP1M1; this interaction plays a role in the mistrafficking and subsequent degradation of host BST2. Interacts with host RANBP2; this interaction allows Vpu to down-regulate host BLM sumoylation. In terms of processing, phosphorylated by host CK2. This phosphorylation is necessary for interaction with human BTRC and degradation of CD4.

The protein localises to the host membrane. Ion channel activity is inhibited by hexamethylene amiloride in vitro. Its function is as follows. Enhances virion budding by targeting host CD4 and Tetherin/BST2 to proteasome degradation. Degradation of CD4 prevents any unwanted premature interactions between viral Env and its host receptor CD4 in the endoplasmic reticulum. Degradation of antiretroviral protein Tetherin/BST2 is important for virion budding, as BST2 tethers new viral particles to the host cell membrane. Mechanistically, Vpu bridges either CD4 or BST2 to BTRC, a substrate recognition subunit of the Skp1/Cullin/F-box protein E3 ubiquitin ligase, induces their ubiquitination and subsequent proteasomal degradation. The alteration of the E3 ligase specificity by Vpu seems to promote the degradation of host IKBKB, leading to NF-kappa-B down-regulation and subsequent apoptosis. Acts as a viroporin that forms an oligomeric ion channel in membranes. Modulates the host DNA repair mechanisms to promote degradation of nuclear viral cDNA in cells that are already productively infected in order to suppress immune sensing and proviral hyper-integration (superinfection). Manipulates PML-NBs and modulates SUMOylation of host BLM protein thereby enhancing its DNA-end processing activity toward viral unintegrated linear DNA. Also inhibits RAD52-mediated homologous repair of viral cDNA, preventing the generation of dead-end circular forms of single copies of the long terminal repeat and permitting sustained nucleolytic attack. The chain is Protein Vpu from Homo sapiens (Human).